Reading from the N-terminus, the 203-residue chain is Guanylate kinase (203 aa).

Positions 3–181 constitute a Guanylate kinase-like domain; sequence GTLYIVAAPS…AVSEMCAIFT (179 aa). Residue 10–17 participates in ATP binding; the sequence is APSGAGKS.

This sequence belongs to the guanylate kinase family.

It localises to the cytoplasm. It carries out the reaction GMP + ATP = GDP + ADP. Its function is as follows. Essential for recycling GMP and indirectly, cGMP. The chain is Guanylate kinase from Xanthomonas campestris pv. campestris (strain 8004).